Consider the following 118-residue polypeptide: Telomere bouquet protein 2 (118 aa).

As to quaternary structure, interacts with bqt1. The bqt1-bqt2-sad1 complex binds rap1.

The protein resides in the cytoplasm. It is found in the nucleus. It localises to the cytoskeleton. The protein localises to the microtubule organizing center. Its subcellular location is the spindle pole body. The protein resides in the chromosome. It is found in the telomere. Its function is as follows. Involved in chromosome segregation. During meiotic prophase, connects telomeres to the spindle pole body by forming a bridge between the telomere protein rap1 and the spindle pole body protein sad1. This is Telomere bouquet protein 2 (bqt2) from Schizosaccharomyces pombe (strain 972 / ATCC 24843) (Fission yeast).